Reading from the N-terminus, the 590-residue chain is Acetylcholinesterase (590 aa).

The N-terminal stretch at 1-24 is a signal peptide; it reads MREMNLLVTSSLGVLLHLVVLCQA. Residue N83 is glycosylated (N-linked (GlcNAc...) asparagine). C91 and C118 are oxidised to a cystine. The Acyl-ester intermediate role is filled by S224. A disulfide bridge connects residues C278 and C289. E351 functions as the Charge relay system in the catalytic mechanism. Cysteines 426 and 545 form a disulfide. A glycan (N-linked (GlcNAc...) asparagine) is linked at N440. H464 acts as the Charge relay system in catalysis. 2 N-linked (GlcNAc...) asparagine glycosylation sites follow: N481 and N557. S567 is lipidated: GPI-anchor amidated serine. Positions 568–590 are cleaved as a propeptide — removed in mature form; it reads SGTSSSKGIIFYVLFSILYLIFY.

This sequence belongs to the type-B carboxylesterase/lipase family. Isoform H form is a homodimer; the asymmetric form is a disulfide-bonded oligomer composed of a collagenic subunit (Q) and a variable number of T catalytic subunits. An interchain disulfide bond is present in what becomes position 596 of the T isoform. Found in the synapses and to a lower extent in extrajunctional areas of muscle and nerve, and on erythrocyte membranes.

The protein resides in the cell membrane. The protein localises to the synapse. It carries out the reaction acetylcholine + H2O = choline + acetate + H(+). Terminates signal transduction at the neuromuscular junction by rapid hydrolysis of the acetylcholine released into the synaptic cleft. May be involved in cell-cell interactions. In Torpedo marmorata (Marbled electric ray), this protein is Acetylcholinesterase (ache).